The sequence spans 549 residues: Oxygen-dependent choline dehydrogenase (549 aa).

4–33 (DFVIIGSGSAGSAMAYRLSEDGRYSVIVIE) provides a ligand contact to FAD. The active-site Proton acceptor is histidine 465.

Belongs to the GMC oxidoreductase family. The cofactor is FAD.

The enzyme catalyses choline + A = betaine aldehyde + AH2. The catalysed reaction is betaine aldehyde + NAD(+) + H2O = glycine betaine + NADH + 2 H(+). Its pathway is amine and polyamine biosynthesis; betaine biosynthesis via choline pathway; betaine aldehyde from choline (cytochrome c reductase route): step 1/1. Its function is as follows. Involved in the biosynthesis of the osmoprotectant glycine betaine. Catalyzes the oxidation of choline to betaine aldehyde and betaine aldehyde to glycine betaine at the same rate. In Brucella ovis (strain ATCC 25840 / 63/290 / NCTC 10512), this protein is Oxygen-dependent choline dehydrogenase.